Here is a 299-residue protein sequence, read N- to C-terminus: Acetaldehyde dehydrogenase (299 aa).

Catalysis depends on Cys-126, which acts as the Acyl-thioester intermediate. Residues Ser-157–Asn-165 and Asn-267 each bind NAD(+).

The protein belongs to the acetaldehyde dehydrogenase family.

It catalyses the reaction acetaldehyde + NAD(+) + CoA = acetyl-CoA + NADH + H(+). The sequence is that of Acetaldehyde dehydrogenase (mhpF) from Carboxydothermus hydrogenoformans (strain ATCC BAA-161 / DSM 6008 / Z-2901).